Reading from the N-terminus, the 666-residue chain is Semaphorin-7A (666 aa).

Residues 1-21 are disordered; it reads MTPPPPGRAAPSAPRARVPGP. Residues 1-44 form the signal peptide; the sequence is MTPPPPGRAAPSAPRARVPGPPARLGLPLRLRLLLLLWAAAASA. Positions 9–21 are enriched in low complexity; that stretch reads AAPSAPRARVPGP. The region spanning 53–490 is the Sema domain; that stretch reads RIFAVWKGHV…SQWEVSQVPL (438 aa). N-linked (GlcNAc...) asparagine glycosylation is present at Asn-105. Cys-120 and Cys-126 are oxidised to a cystine. Arg-135 is modified (asymmetric dimethylarginine). Cys-143 and Cys-152 are joined by a disulfide. N-linked (GlcNAc...) asparagine glycosylation is found at Asn-157 and Asn-258. 7 disulfide bridges follow: Cys-266–Cys-366, Cys-291–Cys-335, Cys-493–Cys-511, Cys-500–Cys-541, Cys-503–Cys-518, Cys-566–Cys-613, and Cys-587–Cys-596. Residues 267-269 form an interaction with integrins region; sequence RGD. Positions 267–269 match the Cell attachment site motif; the sequence is RGD. Asn-330 carries N-linked (GlcNAc...) asparagine glycosylation. In terms of domain architecture, Ig-like C2-type spans 544–629; it reads PKPDKAPLQK…YFREAQHWQL (86 aa). The N-linked (GlcNAc...) asparagine glycan is linked to Asn-602. The GPI-anchor amidated alanine moiety is linked to residue Ala-648. Positions 649-666 are cleaved as a propeptide — removed in mature form; sequence ASLWLGVLPTLTLGLLVH.

This sequence belongs to the semaphorin family. Interacts with ITGA1 and ITGB1. Interacts with PLXNC1. Detected in skin keratinocytes and on endothelial cells from skin blood vessels (at protein level). Expressed in fibroblasts, keratinocytes, melanocytes, placenta, testis, ovary, spleen, brain, spinal cord, lung, heart, adrenal gland, lymph nodes, thymus, intestine and kidney.

It localises to the cell membrane. In terms of biological role, plays an important role in integrin-mediated signaling and functions both in regulating cell migration and immune responses. Promotes formation of focal adhesion complexes, activation of the protein kinase PTK2/FAK1 and subsequent phosphorylation of MAPK1 and MAPK3. Promotes production of pro-inflammatory cytokines by monocytes and macrophages. Plays an important role in modulating inflammation and T-cell-mediated immune responses. Promotes axon growth in the embryonic olfactory bulb. Promotes attachment, spreading and dendrite outgrowth in melanocytes. This Homo sapiens (Human) protein is Semaphorin-7A (SEMA7A).